We begin with the raw amino-acid sequence, 333 residues long: Phosphate acyltransferase (333 aa).

Belongs to the PlsX family. As to quaternary structure, homodimer. Probably interacts with PlsY.

It localises to the cytoplasm. The catalysed reaction is a fatty acyl-[ACP] + phosphate = an acyl phosphate + holo-[ACP]. Its pathway is lipid metabolism; phospholipid metabolism. Catalyzes the reversible formation of acyl-phosphate (acyl-PO(4)) from acyl-[acyl-carrier-protein] (acyl-ACP). This enzyme utilizes acyl-ACP as fatty acyl donor, but not acyl-CoA. The chain is Phosphate acyltransferase from Lactobacillus acidophilus (strain ATCC 700396 / NCK56 / N2 / NCFM).